We begin with the raw amino-acid sequence, 480 residues long: Cobyric acid synthase (480 aa).

Residues 249–436 enclose the GATase cobBQ-type domain; that stretch reads KLKVVVPVLT…LHGFLDSEAA (188 aa). The active-site Nucleophile is cysteine 330. Residue histidine 428 is part of the active site.

It belongs to the CobB/CobQ family. CobQ subfamily.

Its pathway is cofactor biosynthesis; adenosylcobalamin biosynthesis. In terms of biological role, catalyzes amidations at positions B, D, E, and G on adenosylcobyrinic A,C-diamide. NH(2) groups are provided by glutamine, and one molecule of ATP is hydrogenolyzed for each amidation. In Vibrio vulnificus (strain YJ016), this protein is Cobyric acid synthase.